The following is a 1300-amino-acid chain: Kinesin-like protein KIN-4C (1300 aa).

Residues 6–360 (CVRVAVNIRP…LKYANRARNI (355 aa)) enclose the Kinesin motor domain. 85 to 92 (GQTGSGKT) contributes to the ATP binding site. 3 coiled-coil regions span residues 580–615 (TSVL…LASI), 653–697 (QLMR…RAWK), and 781–823 (EVTV…AKIS). 2 stretches are compositionally biased toward basic and acidic residues: residues 956–971 (ADEN…KQET) and 1001–1013 (EWKP…RESE). Disordered stretches follow at residues 956–1018 (ADEN…ESVI), 1097–1132 (NADG…QQQV), 1144–1187 (ALAD…RKKW), and 1200–1300 (PALP…TRRV). Composition is skewed to polar residues over residues 1169 to 1180 (IGNTTGKSNVPR), 1205 to 1222 (THTN…TVDS), 1230 to 1239 (NSDSGESNSI), and 1275 to 1288 (GFVQ…SGSR). Basic and acidic residues predominate over residues 1289–1300 (TSDEKENHTRRV).

The protein belongs to the TRAFAC class myosin-kinesin ATPase superfamily. Kinesin family. KIN-4 subfamily. Homodimer.

Its function is as follows. Kinesin-like motor protein involved in the control of the oriented deposition of cellulose microfibrils. The sequence is that of Kinesin-like protein KIN-4C from Arabidopsis thaliana (Mouse-ear cress).